The primary structure comprises 381 residues: Spermidine/putrescine import ATP-binding protein PotA (381 aa).

Positions 22-252 (VELRNVFKFF…PKTSFVADFI (231 aa)) constitute an ABC transporter domain. 54-61 (GPSGCGKT) contacts ATP.

This sequence belongs to the ABC transporter superfamily. Spermidine/putrescine importer (TC 3.A.1.11.1) family. In terms of assembly, the complex is composed of two ATP-binding proteins (PotA), two transmembrane proteins (PotB and PotC) and a solute-binding protein (PotD).

The protein localises to the cell inner membrane. The catalysed reaction is ATP + H2O + polyamine-[polyamine-binding protein]Side 1 = ADP + phosphate + polyamineSide 2 + [polyamine-binding protein]Side 1.. Its function is as follows. Part of the ABC transporter complex PotABCD involved in spermidine/putrescine import. Responsible for energy coupling to the transport system. The chain is Spermidine/putrescine import ATP-binding protein PotA from Nostoc sp. (strain PCC 7120 / SAG 25.82 / UTEX 2576).